The chain runs to 230 residues: 2-C-methyl-D-erythritol 4-phosphate cytidylyltransferase (230 aa).

Belongs to the IspD/TarI cytidylyltransferase family. IspD subfamily.

It carries out the reaction 2-C-methyl-D-erythritol 4-phosphate + CTP + H(+) = 4-CDP-2-C-methyl-D-erythritol + diphosphate. Its pathway is isoprenoid biosynthesis; isopentenyl diphosphate biosynthesis via DXP pathway; isopentenyl diphosphate from 1-deoxy-D-xylulose 5-phosphate: step 2/6. In terms of biological role, catalyzes the formation of 4-diphosphocytidyl-2-C-methyl-D-erythritol from CTP and 2-C-methyl-D-erythritol 4-phosphate (MEP). This chain is 2-C-methyl-D-erythritol 4-phosphate cytidylyltransferase, found in Laribacter hongkongensis (strain HLHK9).